The sequence spans 341 residues: Anthranilate phosphoribosyltransferase (341 aa).

5-phospho-alpha-D-ribose 1-diphosphate contacts are provided by residues glycine 79, 82–83 (GD), threonine 87, 89–92 (NIST), 107–115 (KHGNRAATS), and serine 119. Glycine 79 contacts anthranilate. Serine 91 serves as a coordination point for Mg(2+). Asparagine 110 serves as a coordination point for anthranilate. Arginine 165 contacts anthranilate. The Mg(2+) site is built by aspartate 224 and glutamate 225.

It belongs to the anthranilate phosphoribosyltransferase family. Homodimer. The cofactor is Mg(2+).

The catalysed reaction is N-(5-phospho-beta-D-ribosyl)anthranilate + diphosphate = 5-phospho-alpha-D-ribose 1-diphosphate + anthranilate. Its pathway is amino-acid biosynthesis; L-tryptophan biosynthesis; L-tryptophan from chorismate: step 2/5. In terms of biological role, catalyzes the transfer of the phosphoribosyl group of 5-phosphorylribose-1-pyrophosphate (PRPP) to anthranilate to yield N-(5'-phosphoribosyl)-anthranilate (PRA). This chain is Anthranilate phosphoribosyltransferase, found in Symbiobacterium thermophilum (strain DSM 24528 / JCM 14929 / IAM 14863 / T).